Reading from the N-terminus, the 454-residue chain is CCA-adding enzyme (454 aa).

The ATP site is built by serine 51 and lysine 54. 2 residues coordinate CTP: serine 51 and lysine 54. Residues aspartate 63, aspartate 65, and aspartate 118 each contribute to the Mg(2+) site. Positions 141, 161, and 170 each coordinate ATP. The CTP site is built by histidine 141, lysine 161, and tyrosine 170.

Belongs to the tRNA nucleotidyltransferase/poly(A) polymerase family. Archaeal CCA-adding enzyme subfamily. Homodimer. Mg(2+) is required as a cofactor.

The enzyme catalyses a tRNA precursor + 2 CTP + ATP = a tRNA with a 3' CCA end + 3 diphosphate. It catalyses the reaction a tRNA with a 3' CCA end + 2 CTP + ATP = a tRNA with a 3' CCACCA end + 3 diphosphate. Catalyzes the addition and repair of the essential 3'-terminal CCA sequence in tRNAs without using a nucleic acid template. Adds these three nucleotides in the order of C, C, and A to the tRNA nucleotide-73, using CTP and ATP as substrates and producing inorganic pyrophosphate. tRNA 3'-terminal CCA addition is required both for tRNA processing and repair. Also involved in tRNA surveillance by mediating tandem CCA addition to generate a CCACCA at the 3' terminus of unstable tRNAs. While stable tRNAs receive only 3'-terminal CCA, unstable tRNAs are marked with CCACCA and rapidly degraded. The polypeptide is CCA-adding enzyme (Methanothermobacter thermautotrophicus (strain ATCC 29096 / DSM 1053 / JCM 10044 / NBRC 100330 / Delta H) (Methanobacterium thermoautotrophicum)).